Consider the following 138-residue polypeptide: Small ribosomal subunit protein uS12 (138 aa).

The residue at position 89 (Asp89) is a 3-methylthioaspartic acid. The segment at Val107–Lys138 is disordered.

It belongs to the universal ribosomal protein uS12 family. In terms of assembly, part of the 30S ribosomal subunit. Contacts proteins S8 and S17. May interact with IF1 in the 30S initiation complex.

In terms of biological role, with S4 and S5 plays an important role in translational accuracy. Functionally, interacts with and stabilizes bases of the 16S rRNA that are involved in tRNA selection in the A site and with the mRNA backbone. Located at the interface of the 30S and 50S subunits, it traverses the body of the 30S subunit contacting proteins on the other side and probably holding the rRNA structure together. The combined cluster of proteins S8, S12 and S17 appears to hold together the shoulder and platform of the 30S subunit. In Azobacteroides pseudotrichonymphae genomovar. CFP2, this protein is Small ribosomal subunit protein uS12.